Reading from the N-terminus, the 35-residue chain is Mu-thomitoxin-Hme1c (35 aa).

Intrachain disulfides connect C2–C18, C9–C23, and C17–C34.

It belongs to the neurotoxin 07 (Beta/delta-agtx) family. Expressed by the venom gland.

The protein localises to the secreted. Its function is as follows. Gating-modifier toxin that inhibits mammalian and insect voltage-gated sodium channels. It shifts the voltage dependence of channel activation to more positive voltages. It shows potent activity on Nav1.4/SCN4A (IC(50)=103 nM), Nav1.5/SCN5A (IC(50)=268 nM) and Para/DmNav1 (IC(50)=555 nM) and lower activities on Nav1.2/SCN2A (IC(50)=1447 nM) and Nav1.6/SCN8A (IC(50)=3504 nM). In addition, at a concentration of 1 uM, the toxin inhibits 90-100% of sodium current through Nav1.2/SCN2A, Nav1.4/SCN4A, Nav1.5/SCN5A, Nav1.6/SCN8A and Para/DmNav1 channels, when the voltage of maximal activation of the channel in control conditions is applied. It binds to the S3-S4 helix-loop-helix motif in the voltage-sensing domain of repeat 1 (shown on hNav1.4/SCN4A). The toxin is amphiphilic and binds to both neutral and negatively charged lipid vesicles with high affinity. The hydrophobic face lies on the opposite side to the hydrophobic faces of classical gating modifiers. This Heriaeus mellotteei (Crab spider) protein is Mu-thomitoxin-Hme1c.